The chain runs to 110 residues: Large ribosomal subunit protein uL22 (110 aa).

The protein belongs to the universal ribosomal protein uL22 family. As to quaternary structure, part of the 50S ribosomal subunit.

Its function is as follows. This protein binds specifically to 23S rRNA; its binding is stimulated by other ribosomal proteins, e.g. L4, L17, and L20. It is important during the early stages of 50S assembly. It makes multiple contacts with different domains of the 23S rRNA in the assembled 50S subunit and ribosome. The globular domain of the protein is located near the polypeptide exit tunnel on the outside of the subunit, while an extended beta-hairpin is found that lines the wall of the exit tunnel in the center of the 70S ribosome. The protein is Large ribosomal subunit protein uL22 of Glaesserella parasuis serovar 5 (strain SH0165) (Haemophilus parasuis).